The chain runs to 220 residues: ATP-dependent Clp protease proteolytic subunit (220 aa).

Serine 122 functions as the Nucleophile in the catalytic mechanism. Histidine 147 is an active-site residue.

The protein belongs to the peptidase S14 family. In terms of assembly, fourteen ClpP subunits assemble into 2 heptameric rings which stack back to back to give a disk-like structure with a central cavity, resembling the structure of eukaryotic proteasomes.

The protein localises to the cytoplasm. It carries out the reaction Hydrolysis of proteins to small peptides in the presence of ATP and magnesium. alpha-casein is the usual test substrate. In the absence of ATP, only oligopeptides shorter than five residues are hydrolyzed (such as succinyl-Leu-Tyr-|-NHMec, and Leu-Tyr-Leu-|-Tyr-Trp, in which cleavage of the -Tyr-|-Leu- and -Tyr-|-Trp bonds also occurs).. Functionally, cleaves peptides in various proteins in a process that requires ATP hydrolysis. Has a chymotrypsin-like activity. Plays a major role in the degradation of misfolded proteins. The sequence is that of ATP-dependent Clp protease proteolytic subunit from Colwellia psychrerythraea (strain 34H / ATCC BAA-681) (Vibrio psychroerythus).